A 313-amino-acid chain; its full sequence is Aspartate carbamoyltransferase catalytic subunit (313 aa).

Carbamoyl phosphate-binding residues include R66 and T67. K94 lines the L-aspartate pocket. Residues R116, H144, and Q147 each contribute to the carbamoyl phosphate site. Residues R177 and R231 each contribute to the L-aspartate site. Carbamoyl phosphate contacts are provided by G272 and P273.

This sequence belongs to the aspartate/ornithine carbamoyltransferase superfamily. ATCase family. In terms of assembly, heterododecamer (2C3:3R2) of six catalytic PyrB chains organized as two trimers (C3), and six regulatory PyrI chains organized as three dimers (R2).

The catalysed reaction is carbamoyl phosphate + L-aspartate = N-carbamoyl-L-aspartate + phosphate + H(+). The protein operates within pyrimidine metabolism; UMP biosynthesis via de novo pathway; (S)-dihydroorotate from bicarbonate: step 2/3. Its function is as follows. Catalyzes the condensation of carbamoyl phosphate and aspartate to form carbamoyl aspartate and inorganic phosphate, the committed step in the de novo pyrimidine nucleotide biosynthesis pathway. The protein is Aspartate carbamoyltransferase catalytic subunit of Pelagibacter ubique (strain HTCC1062).